The chain runs to 81 residues: Small cysteine-rich protein 1 2 (81 aa).

A signal peptide spans 1-19 (MGVNFNICLLLLLVATISS). Residues 20 to 39 (QPLKATEKDDSTDENPFGIY) constitute a propeptide that is removed on maturation.

Belongs to the Cnidaria small cysteine-rich protein (SCRiP) family. alpha subfamily. Post-translationally, the basic myotoxic domain of rattlesnake crotamine toxins (with 6 Cys residues) has been detected in this protein. However, this protein contains 2 additional Cys at the C-terminal region. Hence, this protein may contain 4 disulfide bonds instead of the 3 suggested by the myotoxin domain.

It is found in the secreted. The protein resides in the nematocyst. Its function is as follows. Induces neurotoxic symptoms on zebrafish. Has also been claimed to be implied in calcification, but tests on homolog proteins suggest that proteins of this family have a neurotoxic function and not a calcification function. The polypeptide is Small cysteine-rich protein 1 2 (Montipora capitata (Rice coral)).